Here is a 95-residue protein sequence, read N- to C-terminus: Protein TusB (95 aa).

Belongs to the DsrH/TusB family. As to quaternary structure, heterohexamer, formed by a dimer of trimers. The hexameric TusBCD complex contains 2 copies each of TusB, TusC and TusD. The TusBCD complex interacts with TusE.

It localises to the cytoplasm. Functionally, part of a sulfur-relay system required for 2-thiolation of 5-methylaminomethyl-2-thiouridine (mnm(5)s(2)U) at tRNA wobble positions. This Pectobacterium atrosepticum (strain SCRI 1043 / ATCC BAA-672) (Erwinia carotovora subsp. atroseptica) protein is Protein TusB.